Consider the following 320-residue polypeptide: Ferrochelatase (320 aa).

The Fe cation site is built by histidine 194 and glutamate 275.

The protein belongs to the ferrochelatase family. In terms of assembly, monomer.

The protein localises to the cytoplasm. It catalyses the reaction heme b + 2 H(+) = protoporphyrin IX + Fe(2+). It participates in porphyrin-containing compound metabolism; protoheme biosynthesis; protoheme from protoporphyrin-IX: step 1/1. In terms of biological role, catalyzes the ferrous insertion into protoporphyrin IX. This Escherichia coli (strain 55989 / EAEC) protein is Ferrochelatase.